Here is a 102-residue protein sequence, read N- to C-terminus: Co-chaperonin GroES (102 aa).

The protein belongs to the GroES chaperonin family. In terms of assembly, heptamer of 7 subunits arranged in a ring. Interacts with the chaperonin GroEL.

It localises to the cytoplasm. Together with the chaperonin GroEL, plays an essential role in assisting protein folding. The GroEL-GroES system forms a nano-cage that allows encapsulation of the non-native substrate proteins and provides a physical environment optimized to promote and accelerate protein folding. GroES binds to the apical surface of the GroEL ring, thereby capping the opening of the GroEL channel. In Chlamydia trachomatis serovar D (strain ATCC VR-885 / DSM 19411 / UW-3/Cx), this protein is Co-chaperonin GroES.